The following is a 415-amino-acid chain: Glucose-1-phosphate adenylyltransferase (415 aa).

Residues tyrosine 98, glycine 163, 178–179 (EK), and serine 189 contribute to the alpha-D-glucose 1-phosphate site.

The protein belongs to the bacterial/plant glucose-1-phosphate adenylyltransferase family. In terms of assembly, homotetramer.

The catalysed reaction is alpha-D-glucose 1-phosphate + ATP + H(+) = ADP-alpha-D-glucose + diphosphate. It functions in the pathway glycan biosynthesis; glycogen biosynthesis. Involved in the biosynthesis of ADP-glucose, a building block required for the elongation reactions to produce glycogen. Catalyzes the reaction between ATP and alpha-D-glucose 1-phosphate (G1P) to produce pyrophosphate and ADP-Glc. The polypeptide is Glucose-1-phosphate adenylyltransferase (Fervidobacterium nodosum (strain ATCC 35602 / DSM 5306 / Rt17-B1)).